Reading from the N-terminus, the 256-residue chain is Small ribosomal subunit protein eS1 (256 aa).

Position 2 is an N-acetylalanine; partial (alanine 2).

This sequence belongs to the eukaryotic ribosomal protein eS1 family. In terms of assembly, component of the small ribosomal subunit. Mature ribosomes consist of a small (40S) and a large (60S) subunit. The 40S subunit contains about 33 different proteins and 1 molecule of RNA (18S). The 60S subunit contains about 49 different proteins and 3 molecules of RNA (25S, 5.8S and 5S).

Its subcellular location is the cytoplasm. This chain is Small ribosomal subunit protein eS1, found in Candida tropicalis (strain ATCC MYA-3404 / T1) (Yeast).